The sequence spans 128 residues: Large-conductance mechanosensitive channel (128 aa).

2 consecutive transmembrane segments (helical) span residues 10 to 30 (FAMRGNVVDMAVGVIIGSAFG) and 76 to 96 (GLFIQNVIDFIIIAFAIFMMI).

This sequence belongs to the MscL family. In terms of assembly, homopentamer.

Its subcellular location is the cell inner membrane. In terms of biological role, channel that opens in response to stretch forces in the membrane lipid bilayer. May participate in the regulation of osmotic pressure changes within the cell. In Haemophilus influenzae (strain PittEE), this protein is Large-conductance mechanosensitive channel.